An 87-amino-acid chain; its full sequence is Small ribosomal subunit protein bS18 (87 aa).

A compositionally biased stretch (basic and acidic residues) spans 1–10 (MAGKSSGDRR). Positions 1–23 (MAGKSSGDRRKLLRGAKVGKNAA) are disordered.

It belongs to the bacterial ribosomal protein bS18 family. Part of the 30S ribosomal subunit. Forms a tight heterodimer with protein bS6.

Its function is as follows. Binds as a heterodimer with protein bS6 to the central domain of the 16S rRNA, where it helps stabilize the platform of the 30S subunit. In Clavibacter sepedonicus (Clavibacter michiganensis subsp. sepedonicus), this protein is Small ribosomal subunit protein bS18.